The sequence spans 28 residues: Cyclotide vodo I1 (28 aa).

3 cysteine pairs are disulfide-bonded: cysteine 4–cysteine 18, cysteine 8–cysteine 20, and cysteine 13–cysteine 25.

This is a cyclic peptide. Post-translationally, contains 3 disulfide bonds.

In terms of biological role, probably participates in a plant defense mechanism. This is Cyclotide vodo I1 from Viola odorata (Sweet violet).